The sequence spans 309 residues: Ribosomal RNA small subunit methyltransferase H (309 aa).

S-adenosyl-L-methionine is bound by residues 33 to 35, D53, F79, D100, and Q107; that span reads GGH.

Belongs to the methyltransferase superfamily. RsmH family.

The protein localises to the cytoplasm. It catalyses the reaction cytidine(1402) in 16S rRNA + S-adenosyl-L-methionine = N(4)-methylcytidine(1402) in 16S rRNA + S-adenosyl-L-homocysteine + H(+). Specifically methylates the N4 position of cytidine in position 1402 (C1402) of 16S rRNA. The chain is Ribosomal RNA small subunit methyltransferase H from Clostridium botulinum (strain ATCC 19397 / Type A).